A 118-amino-acid polypeptide reads, in one-letter code: Small ribosomal subunit protein uS13 (118 aa).

The interval 94–118 (SLPLRGQRTKTNARTRKGPRKPIRK) is disordered.

Belongs to the universal ribosomal protein uS13 family. As to quaternary structure, part of the 30S ribosomal subunit. Forms a loose heterodimer with protein S19. Forms two bridges to the 50S subunit in the 70S ribosome.

Its function is as follows. Located at the top of the head of the 30S subunit, it contacts several helices of the 16S rRNA. In the 70S ribosome it contacts the 23S rRNA (bridge B1a) and protein L5 of the 50S subunit (bridge B1b), connecting the 2 subunits; these bridges are implicated in subunit movement. Contacts the tRNAs in the A and P-sites. The chain is Small ribosomal subunit protein uS13 from Shewanella violacea (strain JCM 10179 / CIP 106290 / LMG 19151 / DSS12).